Reading from the N-terminus, the 289-residue chain is Transcription factor MafA (289 aa).

A compositionally biased stretch (low complexity) spans 52 to 73; the sequence is STPISTPCSSVPSSPSFCAPSP. Disordered regions lie at residues 52–87 and 126–164; these read STPI…PNAA and HHHH…HHHH. A compositionally biased stretch (polar residues) spans 74 to 87; it reads GAQSGVNPSNPNAA. A compositionally biased stretch (basic residues) spans 152–164; the sequence is GHHHQVHHHHHHH. Positions 201–226 are basic motif; the sequence is RLKQKRRTLKNRGYAQSCRYKRVQQR. The bZIP domain maps to 201 to 264; it reads RLKQKRRTLK…DLYKDKYEKL (64 aa). The interval 229–250 is leucine-zipper; sequence LETEKCQLQSQVEQLKQEVSRL. Residues 266-289 form a disordered region; it reads SRSFTTRESPPQGNPGKANADFFM. The span at 267-276 shows a compositional bias: polar residues; sequence RSFTTRESPP.

The protein belongs to the bZIP family. Maf subfamily.

Its subcellular location is the nucleus. Its function is as follows. Transcription factor, possibly involved in transcription regulation during lens development. The chain is Transcription factor MafA (mafa) from Xenopus tropicalis (Western clawed frog).